The following is a 130-amino-acid chain: MAKLIKKISLRKGKRRIPKGVIHIQASFNNTIVTVTDIRGQVVFWSSAGACGFKGAKKSTPFAAQTAAENAIRVLIDQGMKQAEVMISGPGPGRDTALRAIRRSGVILNFVRDVTPMPHNGCRPPKKRRV.

Belongs to the universal ribosomal protein uS11 family. In terms of assembly, part of the 30S ribosomal subunit.

The protein localises to the plastid. It is found in the chloroplast. In Physcomitrium patens (Spreading-leaved earth moss), this protein is Small ribosomal subunit protein uS11c.